The chain runs to 336 residues: Ribosomal RNA small subunit methyltransferase C (336 aa).

This sequence belongs to the methyltransferase superfamily. RsmC family. Monomer.

Its subcellular location is the cytoplasm. The catalysed reaction is guanosine(1207) in 16S rRNA + S-adenosyl-L-methionine = N(2)-methylguanosine(1207) in 16S rRNA + S-adenosyl-L-homocysteine + H(+). Specifically methylates the guanine in position 1207 of 16S rRNA in the 30S particle. The chain is Ribosomal RNA small subunit methyltransferase C from Buchnera aphidicola subsp. Schizaphis graminum (strain Sg).